A 397-amino-acid polypeptide reads, in one-letter code: MGKTIAINAGSSTLKFKLFEMPQERVIAQGAVERIGFKTSPVNIRYGVDHHYQEKAVVADHLAAVNIVLDELIKLRIIDSYDEITGVGHRVVAGGEQFHDSVLITDQVLKQITDLAEYAPLHNPANAVGIRAFKRVLPHVPAVAVFDTAFHASMPAVNYLYSLPYDYYQRYGARKFGAHGTSHRYVAVRAAKLLGRPLETLKLITLHLGAGSSITAIDHGQSLDTSMGFTPLAGITMATRSGDVDPSLVAYLMKKLNISDPDEMLTILNTQSGLLGLAGSADMQELEARYDEDSQAQLAIDIFVNRIVKYVGAYLAELQGADALVITAGIGERDARMRQRIADRLTYFGVAIDPTKNQVSGVERDLSTTDAKIRTLLIPTDEELMIARDVERVAQNQ.

N8 contacts Mg(2+). K15 is an ATP binding site. R90 serves as a coordination point for substrate. The Proton donor/acceptor role is filled by D147. 207–211 is a binding site for ATP; the sequence is HLGAG. Position 382 (E382) interacts with Mg(2+).

The protein belongs to the acetokinase family. Homodimer. Mg(2+) is required as a cofactor. It depends on Mn(2+) as a cofactor.

It is found in the cytoplasm. The catalysed reaction is acetate + ATP = acetyl phosphate + ADP. The protein operates within metabolic intermediate biosynthesis; acetyl-CoA biosynthesis; acetyl-CoA from acetate: step 1/2. Functionally, catalyzes the formation of acetyl phosphate from acetate and ATP. Can also catalyze the reverse reaction. The polypeptide is Acetate kinase (Lactiplantibacillus plantarum (strain ATCC BAA-793 / NCIMB 8826 / WCFS1) (Lactobacillus plantarum)).